The following is a 920-amino-acid chain: Isoleucine--tRNA ligase (920 aa).

A 'HIGH' region motif is present at residues 58 to 68 (PYANGHLHLGH). Position 569 (glutamate 569) interacts with L-isoleucyl-5'-AMP. Residues 610 to 614 (KMSKS) carry the 'KMSKS' region motif. Residue lysine 613 coordinates ATP. Zn(2+) contacts are provided by cysteine 895, cysteine 898, cysteine 910, and cysteine 913.

This sequence belongs to the class-I aminoacyl-tRNA synthetase family. IleS type 1 subfamily. As to quaternary structure, monomer. Requires Zn(2+) as cofactor.

It localises to the cytoplasm. The catalysed reaction is tRNA(Ile) + L-isoleucine + ATP = L-isoleucyl-tRNA(Ile) + AMP + diphosphate. In terms of biological role, catalyzes the attachment of isoleucine to tRNA(Ile). As IleRS can inadvertently accommodate and process structurally similar amino acids such as valine, to avoid such errors it has two additional distinct tRNA(Ile)-dependent editing activities. One activity is designated as 'pretransfer' editing and involves the hydrolysis of activated Val-AMP. The other activity is designated 'posttransfer' editing and involves deacylation of mischarged Val-tRNA(Ile). The polypeptide is Isoleucine--tRNA ligase (Helicobacter pylori (strain HPAG1)).